The primary structure comprises 323 residues: Fos-related antigen 2 (323 aa).

Residues 1–27 (MYQDYPGSFDTSSRGSSGSPGHPEPYS) are compositionally biased toward low complexity. Positions 1-31 (MYQDYPGSFDTSSRGSSGSPGHPEPYSAGAA) are disordered. Residues 124–187 (EEKRRIRRER…EKLEFMLVAH (64 aa)) enclose the bZIP domain. Positions 126 to 128 (KRR) are basic motif. Residues 129 to 136 (IRRERNKL) form a leucine-zipper region. Disordered regions lie at residues 194-214 (SPEERRSPPTSSLQSVRTGAS) and 288-323 (ESPLSPSESCSKAHRRSSSSGDQSSDSLNSPTLLAL). Low complexity predominate over residues 305 to 317 (SSSGDQSSDSLNS).

It belongs to the bZIP family. Fos subfamily. Heterodimer with JUN.

Its subcellular location is the nucleus. This Gallus gallus (Chicken) protein is Fos-related antigen 2 (FOSL2).